The following is a 486-amino-acid chain: Transcriptional regulator ERG (486 aa).

The span at 41–54 shows a compositional bias: polar residues; sequence TASSSSDYGQTSKM. Disordered stretches follow at residues 41 to 62 and 79 to 99; these read TASSSSDYGQTSKMSPRVPQQD and PSQVNGSRNSPDECSVNKGGK. Phosphoserine occurs at positions 55, 88, and 103. The region spanning 120-206 is the PNT domain; that stretch reads VPPPNMTTNE…SHLHYLRETP (87 aa). The tract at residues 249-311 is disordered; the sequence is QRITTRPDLP…ILGPTSSRLA (63 aa). A compositionally biased stretch (polar residues) spans 271 to 284; it reads SHLTPQSKAAQPSP. K289 participates in a covalent cross-link: Glycyl lysine isopeptide (Lys-Gly) (interchain with G-Cter in SUMO2). A DNA-binding region (ETS) is located at residues 318-398; it reads IQLWQFLLEL…HGKRYAYKFD (81 aa).

The protein belongs to the ETS family. In terms of assembly, identified in a IGF2BP1-dependent mRNP granule complex containing untranslated mRNAs. Interacts with SETDB1.

The protein localises to the nucleus. Its subcellular location is the cytoplasm. Its function is as follows. Transcriptional regulator. May participate in transcriptional regulation through the recruitment of SETDB1 histone methyltransferase and subsequent modification of local chromatin structure. The chain is Transcriptional regulator ERG (Erg) from Mus musculus (Mouse).